A 303-amino-acid polypeptide reads, in one-letter code: Kanosamine kinase (303 aa).

Belongs to the ROK (NagC/XylR) family.

It catalyses the reaction kanosamine + ATP = D-kanosamine 6-phosphate + ADP + H(+). Its pathway is antibiotic biosynthesis; rifamycin B biosynthesis. Its activity is regulated as follows. Inhibited by Zn(2+), Cu(2+), and Fe(2+). Its function is as follows. Involved in the biosynthesis of 3-amino-5-hydroxybenzoate (AHBA), a compound that then serves as the starter unit for the assembly of a polyketide during the biosynthesis of rifamycin B and other ansamycin antibiotics. Catalyzes only the phosphorylation of kanosamine to yield kanosamine 6-phosphate. This chain is Kanosamine kinase (rifN), found in Amycolatopsis mediterranei (strain S699) (Nocardia mediterranei).